A 522-amino-acid polypeptide reads, in one-letter code: 5,6-dihydroxyindole-2-carboxylic acid oxidase (522 aa).

The N-terminal stretch at 1 to 21 (MLRTSCGGMLLLVHALGLVRA) is a signal peptide. The Lumenal, melanosome portion of the chain corresponds to 22-470 (QFPRACVTPE…RPLTPTQIVT (449 aa)). 5 cysteine pairs are disulfide-bonded: C27–C38, C39–C59, C50–C89, C91–C100, and C103–C112. N164 and N171 each carry an N-linked (GlcNAc...) asparagine glycan. Zn(2+) is bound by residues H182, H205, and H214. Cystine bridges form between C248–C251 and C280–C293. The N-linked (GlcNAc...) asparagine glycan is linked to N294. Zn(2+) is bound by residues H367 and H371. N-linked (GlcNAc...) asparagine glycosylation is present at N375. H394 lines the Zn(2+) pocket. A helical transmembrane segment spans residues 471–491 (VAVVAALLLVAIIFAASTCVV). At 492–522 (HLRGNRTEGRQPLLGDQYQRYEDHNKTQSVV) the chain is on the cytoplasmic side.

The protein belongs to the tyrosinase family. Cu(2+) is required as a cofactor. Requires Zn(2+) as cofactor.

Its subcellular location is the melanosome membrane. It carries out the reaction 2 5,6-dihydroxyindole-2-carboxylate + O2 = 2 indole-5,6-quinone-2-carboxylate + 2 H2O. It participates in pigment biosynthesis; melanin biosynthesis. Plays a role in melanin biosynthesis. Catalyzes the oxidation of 5,6-dihydroxyindole-2-carboxylic acid (DHICA) into indole-5,6-quinone-2-carboxylic acid. May regulate or influence the type of melanin synthesized. Also to a lower extent, capable of hydroxylating tyrosine and producing melanin. The polypeptide is 5,6-dihydroxyindole-2-carboxylic acid oxidase (tyrp1) (Carassius auratus (Goldfish)).